The following is a 365-amino-acid chain: Protein YIM1 (365 aa).

It belongs to the YIM1 family.

It is found in the lipid droplet. It localises to the mitochondrion. The chain is Protein YIM1 (YIM1) from Saccharomyces cerevisiae (strain RM11-1a) (Baker's yeast).